Consider the following 186-residue polypeptide: MDADSDVALDILITNVVCVFRTRCHLNLRKIALEGANVIYKRDVGKVLMKLRKPRITATIWSSGKIICTGATSEEEAKFGARRLARSLQKLGFQVIFTDFKVVNVLAVCNMPFEIRLPEFTKNNRPHASYEPELHPAVCYRIKSLRATLQIFSTGSITVTGPNVKAVATAVEQIYPFVFESRKEIL.

This sequence belongs to the TBP family. Binds TFIIA and TFIIB.

It localises to the cytoplasm. The protein localises to the nucleus. Its function is as follows. Part of a specialized transcription system that mediates the transcription of most ribosomal proteins through the 5'-TCT-3' motif which is a core promoter element at these genes. Seems to also mediate the transcription of NF1. Does not bind the TATA box. This is TATA box-binding protein-like 1 (TBPL1) from Bos taurus (Bovine).